Reading from the N-terminus, the 106-residue chain is MDLMGMMGKLKETQQKIEDTKKRLDTVLIDEQSADGLLKITVTANRKVKSISIDDSLLEDKEQLEDYLVVTLNKVIEKATSVNERELDAVARMDMPSIPGMDNLFK.

It belongs to the YbaB/EbfC family. In terms of assembly, homodimer.

It is found in the cytoplasm. Its subcellular location is the nucleoid. Binds to DNA and alters its conformation. May be involved in regulation of gene expression, nucleoid organization and DNA protection. This Flavobacterium johnsoniae (strain ATCC 17061 / DSM 2064 / JCM 8514 / BCRC 14874 / CCUG 350202 / NBRC 14942 / NCIMB 11054 / UW101) (Cytophaga johnsonae) protein is Nucleoid-associated protein Fjoh_2555.